A 515-amino-acid polypeptide reads, in one-letter code: DNA-directed RNA polymerase subunit Rpo2N (515 aa).

The protein belongs to the RNA polymerase beta chain family. As to quaternary structure, part of the RNA polymerase complex.

The protein resides in the cytoplasm. The enzyme catalyses RNA(n) + a ribonucleoside 5'-triphosphate = RNA(n+1) + diphosphate. Functionally, DNA-dependent RNA polymerase (RNAP) catalyzes the transcription of DNA into RNA using the four ribonucleoside triphosphates as substrates. The Rpo2 subunit (Rpo2N and Rpo2C in this organism) is implicated in DNA promoter recognition and in nucleotide binding. The sequence is that of DNA-directed RNA polymerase subunit Rpo2N from Methanothermobacter thermautotrophicus (strain Winter) (Methanobacterium thermoautotrophicum).